The following is a 612-amino-acid chain: Amyloid-beta precursor-like protein (612 aa).

An N-terminal signal peptide occupies residues 1 to 21; that stretch reads MGPSVRPGFLVVVIGLQFVAA. The Extracellular segment spans residues 22-542; it reads SMEVNSRKFE…NLYANSHANS (521 aa). The segment at 28–122 is GFLD subdomain; that stretch reads RKFEPMVAFI…PFRCLVGPFQ (95 aa). The 162-residue stretch at 28–189 folds into the E1 domain; the sequence is RKFEPMVAFI…SGVEFVCCPK (162 aa). 6 disulfides stabilise this stretch: C38/C60, C71/C116, C96/C103, C132/C187, C143/C173, and C157/C186. 3 N-linked (GlcNAc...) asparagine glycosylation sites follow: N99, N108, and N150. The cuBD subdomain stretch occupies residues 130–189; it reads EHCIFDHYHDPRVCNEFDQCNETAMSKCSARGMTTQSFAMLWPCQEPGHFSGVEFVCCPK. The E2 domain occupies 223–419; sequence GDSKYMSKYA…KQVRPNIDKF (197 aa). Disordered regions lie at residues 251 to 276 and 437 to 490; these read ERDT…TDPK and QEPT…FDSE. 2 stretches are compositionally biased toward basic and acidic residues: residues 439-453 and 470-483; these read PTPK…KAED and KPTE…EDIK. Residues 543–563 form a helical membrane-spanning segment; that stretch reads VLGIAIGGVVVFIIIVVAVVM. At 564-612 the chain is on the cytoplasmic side; sequence LKRRTQRQRVTHGFVEVDPAASPEERHVANMQMSGYENPTYKYFEMQNQ. Positions 598–612 are required for the interaction with kinesin heavy chain and for anterograde transport in axons; that stretch reads GYENPTYKYFEMQNQ. Residues 599 to 604 carry the YENPXY motif motif; that stretch reads YENPTY.

This sequence belongs to the APP family. In terms of assembly, interacts (via cytoplasmic domain) with kinesin heavy chain. Expressed in the cervicothoracic ganglion (stellate ganglion) (at protein level).

It localises to the cell membrane. It is found in the cell projection. The protein localises to the axon. Functionally, acts as a kinesin I membrane receptor, thereby playing a role in axonal anterograde transport of cargo towards synapses in axons. The polypeptide is Amyloid-beta precursor-like protein (Doryteuthis pealeii (Longfin inshore squid)).